The primary structure comprises 426 residues: MKLQKPKGTQDILPQESAKWQYVEEFARETFRKYNYAEIRTPIFEHYEVISRSVGDTTDIVTKEMYDFYDKGDRHITLRPEGTAPVVRSYVENKLFAPEVQKPVKLYYMGSMFRYERPQAGRLREFHQIGAECFGSSNPATDVEMIAMAAQFFKEIGITNVSLELNTLGNPESRAAYRQALIDYLTPLKASLSADSQRRLEENPLRVLDSKEPEDKVAVEGAPSILDYLDEESSAYFAAVRSMLETLQIPYVINTNMVRGLDYYNHTIFEFTTEVAGSQLTICAGGRYDGLVAYFGGPETPGVGFGMGLERLLLVLDKQGVELPIEMGLDAYIAVLGAGANGKALELVQSLRAQGFAAERDYLDRKIKAQFKSADIFQAKTIITLGESELESGELTVKNNVTRQEVTVAFEAIKTDFQGVLAQIGL.

The protein belongs to the class-II aminoacyl-tRNA synthetase family. Homodimer.

It localises to the cytoplasm. The enzyme catalyses tRNA(His) + L-histidine + ATP = L-histidyl-tRNA(His) + AMP + diphosphate + H(+). The sequence is that of Histidine--tRNA ligase from Streptococcus gordonii (strain Challis / ATCC 35105 / BCRC 15272 / CH1 / DL1 / V288).